The primary structure comprises 320 residues: Cell-cell adhesion glycoprotein 64 (320 aa).

The N-terminal stretch at 1-19 (MNKFITLFVLLASVSVAMS) is a signal peptide. 9 disulfides stabilise this stretch: C39–C57, C67–C79, C73–C86, C98–C110, C104–C115, C123–C138, C132–C147, C157–C171, and C165–C176. A glycan (N-linked (GlcNAc...) asparagine) is linked at N49. The N-linked (GlcNAc...) asparagine glycan is linked to N80. N-linked (GlcNAc...) asparagine glycosylation is found at N141 and N158. An N-linked (GlcNAc...) asparagine glycan is attached at N187. Intrachain disulfides connect C188–C202 and C194–C207. N-linked (GlcNAc...) asparagine glycosylation is present at N216. Disulfide bonds link C226–C246, C232–C234, C266–C285, and C270–C281. The GPI-like-anchor amidated serine moiety is linked to residue S298. The propeptide at 299 to 320 (SATTIAFNAFVVFAIVLSVLLF) is removed in mature form.

Contains 18 disulfide bonds. In terms of processing, the GPI-like-anchor contains a phosphoceramide group, rather than a phosphatidyl group.

It localises to the cell membrane. Its function is as follows. Cell-cell adhesion during development. The chain is Cell-cell adhesion glycoprotein 64 from Heterostelium pallidum (Cellular slime mold).